Here is a 198-residue protein sequence, read N- to C-terminus: Transcription factor LBX2 (198 aa).

3 disordered regions span residues 24–46 (MVPR…SPLC), 63–89 (ALQP…RKSR), and 173–198 (DPGL…QVDD). Positions 85–144 (RRKSRTAFTAQQVLELERRFVFQKYLAPSERDGLATRLGLANAQVVTWFQNRRAKLKRDV) form a DNA-binding region, homeobox.

It is found in the nucleus. Transcription factor. The polypeptide is Transcription factor LBX2 (LBX2) (Homo sapiens (Human)).